A 783-amino-acid polypeptide reads, in one-letter code: Polyribonucleotide nucleotidyltransferase 1, mitochondrial (783 aa).

Residues 1-46 (MAACRYCCSCLRLRPLSDGPFCLPGRDRALTQLLVRALWSSTGSRA) constitute a mitochondrion transit peptide. N6-acetyllysine occurs at positions 250, 264, 285, and 289. An N6-succinyllysine modification is found at lysine 552. The region spanning 605–664 (PVVETVQVPLSKRAKFVGPGGYNLKKLQAETGVTISQVDEETFSVFAPTPSALHEARDFI) is the KH domain. The S1 motif domain maps to 679–750 (GAVYTATITE…ADGRMRLSRK (72 aa)). Serine 754 and serine 782 each carry phosphoserine.

The protein belongs to the polyribonucleotide nucleotidyltransferase family. Homotrimer; in free form. Homooligomer. Component of the mitochondrial degradosome (mtEXO) complex which is a heteropentamer containing 2 copies of SUPV3L1 and 3 copies of PNPT1. As part of the mitochondrial degradosome complex, interacts with GRSF1 in an RNA-dependent manner; the interaction enhances the activity of the complex. Interacts with TCL1A; the interaction has no effect on PNPT1 exonuclease activity.

The protein resides in the cytoplasm. It is found in the mitochondrion matrix. The protein localises to the mitochondrion intermembrane space. The enzyme catalyses RNA(n+1) + phosphate = RNA(n) + a ribonucleoside 5'-diphosphate. Its function is as follows. RNA-binding protein implicated in numerous RNA metabolic processes. Catalyzes the phosphorolysis of single-stranded polyribonucleotides processively in the 3'-to-5' direction. Mitochondrial intermembrane factor with RNA-processing exoribonulease activity. Component of the mitochondrial degradosome (mtEXO) complex, that degrades 3' overhang double-stranded RNA with a 3'-to-5' directionality in an ATP-dependent manner. Involved in the degradation of non-coding mitochondrial transcripts (MT-ncRNA) and tRNA-like molecules. Required for correct processing and polyadenylation of mitochondrial mRNAs. Plays a role as a cytoplasmic RNA import factor that mediates the translocation of small RNA components like the 5S RNA, the RNA subunit of ribonuclease P and the mitochondrial RNA-processing (MRP) RNA, into the mitochondrial matrix. Plays a role in mitochondrial morphogenesis and respiration; regulates the expression of the electron transport chain (ETC) components at the mRNA and protein levels. In the cytoplasm, shows a 3'-to-5' exoribonuclease mediating mRNA degradation activity; degrades c-myc mRNA upon treatment with IFNB1/IFN-beta, resulting in a growth arrest in melanoma cells. Regulates the stability of specific mature miRNAs in melanoma cells; specifically and selectively degrades miR-221, preferentially. Also plays a role in RNA cell surveillance by cleaning up oxidized RNAs. Binds to the RNA subunit of ribonuclease P, MRP RNA and miR-221 microRNA. The sequence is that of Polyribonucleotide nucleotidyltransferase 1, mitochondrial (PNPT1) from Pongo abelii (Sumatran orangutan).